The sequence spans 364 residues: Mannose-1-phosphate guanyltransferase (364 aa).

Belongs to the transferase hexapeptide repeat family.

The protein localises to the cytoplasm. The enzyme catalyses alpha-D-mannose 1-phosphate + GTP + H(+) = GDP-alpha-D-mannose + diphosphate. Its pathway is nucleotide-sugar biosynthesis; GDP-alpha-D-mannose biosynthesis; GDP-alpha-D-mannose from alpha-D-mannose 1-phosphate (GTP route): step 1/1. Functionally, involved in cell wall synthesis where it is required for glycosylation. Involved in cell cycle progression through cell-size checkpoint. This Cryptococcus neoformans var. neoformans serotype D (strain B-3501A) (Filobasidiella neoformans) protein is Mannose-1-phosphate guanyltransferase (MPG1).